Here is a 278-residue protein sequence, read N- to C-terminus: Energy-coupling factor transporter ATP-binding protein EcfA (278 aa).

Residues 5 to 240 (LETKNLVYNY…KEVIDEADLR (236 aa)) form the ABC transporter domain. An ATP-binding site is contributed by 38-45 (GHNGAGKS).

Belongs to the ABC transporter superfamily. Energy-coupling factor EcfA family. As to quaternary structure, forms a stable energy-coupling factor (ECF) transporter complex composed of 2 membrane-embedded substrate-binding proteins (S component), 2 ATP-binding proteins (A component) and 2 transmembrane proteins (T component).

Its subcellular location is the cell membrane. In terms of biological role, ATP-binding (A) component of a common energy-coupling factor (ECF) ABC-transporter complex. Unlike classic ABC transporters this ECF transporter provides the energy necessary to transport a number of different substrates. In Methanosphaera stadtmanae (strain ATCC 43021 / DSM 3091 / JCM 11832 / MCB-3), this protein is Energy-coupling factor transporter ATP-binding protein EcfA.